A 121-amino-acid polypeptide reads, in one-letter code: Small ribosomal subunit protein uS13 (121 aa).

Residues 91–121 (HRMSLPVRGQRTRTNARTRRGSRKTVAGRKK) are disordered. The segment covering 100–121 (QRTRTNARTRRGSRKTVAGRKK) has biased composition (basic residues).

The protein belongs to the universal ribosomal protein uS13 family. In terms of assembly, part of the 30S ribosomal subunit. Forms a loose heterodimer with protein S19. Forms two bridges to the 50S subunit in the 70S ribosome.

Functionally, located at the top of the head of the 30S subunit, it contacts several helices of the 16S rRNA. In the 70S ribosome it contacts the 23S rRNA (bridge B1a) and protein L5 of the 50S subunit (bridge B1b), connecting the 2 subunits; these bridges are implicated in subunit movement. Contacts the tRNAs in the A and P-sites. In Prochlorococcus marinus (strain MIT 9515), this protein is Small ribosomal subunit protein uS13.